Here is a 737-residue protein sequence, read N- to C-terminus: Zinc finger protein 585A (737 aa).

The KRAB domain occupies 1 to 65; it reads MAAPTREEWR…QGERPRQSCP (65 aa). 6 C2H2-type zinc fingers span residues 126–148, 154–176, 182–204, 210–232, 238–260, and 266–288; these read YVCIECGKAFVQKPEFIIHQKTH, FKCNECGKSFFQVSSLFRHQRIH, YECSQCGKGFSYNSDLSIHEKIH, HECTDCGKAFTQKSTLKMHQKIH, YICIECGQAFIQKTHLIAHRRIH, and YECSNCGKSFISKSQLQVHQRVH. Residues 294–316 form a C2H2-type 7; degenerate zinc finger; the sequence is YICTEYGKVFSNNSNLITHKKVQ. 15 consecutive C2H2-type zinc fingers follow at residues 322–344, 350–372, 378–400, 406–428, 434–456, 462–484, 490–512, 518–540, 546–568, 574–596, 602–624, 630–652, 658–680, 686–708, and 714–736; these read SICTECGKAFTYRSELIIHQRIH, YACSDCGKAFTQKSALTVHQRIH, YICMKCGLAFIQKAHLIAHQIIH, YKCGHCGKLFTSKSQLHVHKRIH, YMCNKCGKAFTNRSNLITHQKTH, YICSKCGKAFTQRSDLITHQRIH, YECSTCGKAFTQKSHLNIHQKIH, YECHECGKAFNQKSILIVHQKIH, YVCTECGRAFIRKSNFITHQRIH, YECSDCGKSFTSKSQLLVHQPLH, YVCAECGKAFSGRSNLSKHQKTH, YICSECGKTFRQKSELITHHRIH, YECSDCGKSFTKKSQLQVHQRIH, YVCAECGKAFTDRSNLNKHQTTH, and YKCGICGKGFVQKSVFSVHQSNH.

The protein belongs to the krueppel C2H2-type zinc-finger protein family.

It localises to the nucleus. Functionally, may be involved in transcriptional regulation. The chain is Zinc finger protein 585A (ZNF585A) from Pongo abelii (Sumatran orangutan).